Here is a 360-residue protein sequence, read N- to C-terminus: DNA replication and repair protein RecF (360 aa).

30 to 37 serves as a coordination point for ATP; that stretch reads GQNGSGKT.

This sequence belongs to the RecF family.

The protein localises to the cytoplasm. The RecF protein is involved in DNA metabolism; it is required for DNA replication and normal SOS inducibility. RecF binds preferentially to single-stranded, linear DNA. It also seems to bind ATP. In Shewanella sp. (strain MR-4), this protein is DNA replication and repair protein RecF.